Reading from the N-terminus, the 945-residue chain is Translation initiation factor IF-2 (945 aa).

Disordered stretches follow at residues 52–80 (RSHG…DSSG) and 96–357 (MKRD…FQAP). The span at 153-175 (PEPEPIVEPEPEPEPEPEPEPQP) shows a compositional bias: acidic residues. Basic and acidic residues-rich tracts occupy residues 215–283 (DEER…KEAA) and 294–310 (AKTE…RTAR). The 170-residue stretch at 445 to 614 (PRAPVVTVMG…LLQAEVLELT (170 aa)) folds into the tr-type G domain. A G1 region spans residues 454-461 (GHVDHGKT). Residue 454–461 (GHVDHGKT) coordinates GTP. The interval 479–483 (GITQH) is G2. The interval 500 to 503 (DTPG) is G3. Residues 500–504 (DTPGH) and 554–557 (NKID) contribute to the GTP site. A G4 region spans residues 554–557 (NKID). The segment at 590–592 (SAK) is G5.

It belongs to the TRAFAC class translation factor GTPase superfamily. Classic translation factor GTPase family. IF-2 subfamily.

It localises to the cytoplasm. In terms of biological role, one of the essential components for the initiation of protein synthesis. Protects formylmethionyl-tRNA from spontaneous hydrolysis and promotes its binding to the 30S ribosomal subunits. Also involved in the hydrolysis of GTP during the formation of the 70S ribosomal complex. The chain is Translation initiation factor IF-2 from Aromatoleum aromaticum (strain DSM 19018 / LMG 30748 / EbN1) (Azoarcus sp. (strain EbN1)).